A 331-amino-acid chain; its full sequence is Cysteine and histidine-rich domain-containing protein 1 (331 aa).

Zn(2+)-binding residues include Cys5, Cys10, Cys24, His27, Cys42, Cys43, Cys59, His64, Cys157, Cys162, Cys176, His179, Cys194, Cys195, Cys211, and His216. CHORD domains follow at residues 5–64 (CYNR…KGLH) and 157–216 (CKNA…TGTH). The 90-residue stretch at 227-316 (VVPCRHDWHQ…AEPLLWASLE (90 aa)) folds into the CS domain.

Its function is as follows. Regulates centrosome duplication. This chain is Cysteine and histidine-rich domain-containing protein 1 (CHORDC1), found in Gallus gallus (Chicken).